The primary structure comprises 232 residues: Large ribosomal subunit protein uL1 (232 aa).

The protein belongs to the universal ribosomal protein uL1 family. As to quaternary structure, part of the 50S ribosomal subunit.

In terms of biological role, binds directly to 23S rRNA. The L1 stalk is quite mobile in the ribosome, and is involved in E site tRNA release. Protein L1 is also a translational repressor protein, it controls the translation of the L11 operon by binding to its mRNA. This is Large ribosomal subunit protein uL1 from Jannaschia sp. (strain CCS1).